Here is a 546-residue protein sequence, read N- to C-terminus: Zinc finger and BTB domain-containing protein 7A (546 aa).

Residues 34 to 101 form the BTB domain; that stretch reads CDVVILVEGQ…AYTATLTVST (68 aa). Positions 189 to 288 are disordered; that stretch reads QEDEEEPDCN…SFVPTGAEAE (100 aa). 3 C2H2-type zinc fingers span residues 359-381, 387-409, and 415-437; these read QKCPICAKVIQGAGKLPRHIRTH, YECNICNVRFTRQDKLKVHMRKH, and YLCQQCGAAFAHNYDLKNHMRVH. Residues 443-467 form a C2H2-type 4; atypical zinc finger; sequence YQCDSCFKTFVRSDHLHRHLKKDGC. The segment at 463–546 is disordered; the sequence is KKDGCNGIPS…AAEGSAPGPS (84 aa). Residues 534 to 546 show a composition bias toward low complexity; that stretch reads AGGAAEGSAPGPS.

It localises to the nucleus. Functionally, transcription factor that represses the transcription of a wide range of genes involved in cell proliferation and differentiation. Directly and specifically binds to the consensus sequence 5'-[GA][CA]GACCCCCCCCC-3' and represses transcription both by regulating the organization of chromatin and through the direct recruitment of transcription factors to gene regulatory regions. May also play a role, independently of its transcriptional activity, in double-strand break repair via classical non-homologous end joining/cNHEJ and in alternative splicing. The chain is Zinc finger and BTB domain-containing protein 7A from Gallus gallus (Chicken).